The primary structure comprises 294 residues: MDNLQNVLKIGLPKGSLQDSTLELFANAGFHFSVQSRSYFPSIEDDELEAILIRAQEMAHYVELGAFDVGLTGKDWIIETDADVVEVADLVYSKASMRPVRWVLAVPESSAIKSVKDLEGKHIATEVVNITKKYLARNGVNASVEFSWGATEVKPPDLADAIVEVTETGSSLRANKLRIVDTILESNTKLIANKASWNDSWKREKIENMAMLLQGAINAQGKVGLKMNAPKAALQNIAAIIPALRQPTISNLADENWVALEVIVSEKTVRKLIPELKRAGAEGIFEYNINKLID.

It belongs to the ATP phosphoribosyltransferase family. Long subfamily. It depends on Mg(2+) as a cofactor.

The protein resides in the cytoplasm. The catalysed reaction is 1-(5-phospho-beta-D-ribosyl)-ATP + diphosphate = 5-phospho-alpha-D-ribose 1-diphosphate + ATP. It functions in the pathway amino-acid biosynthesis; L-histidine biosynthesis; L-histidine from 5-phospho-alpha-D-ribose 1-diphosphate: step 1/9. With respect to regulation, feedback inhibited by histidine. Functionally, catalyzes the condensation of ATP and 5-phosphoribose 1-diphosphate to form N'-(5'-phosphoribosyl)-ATP (PR-ATP). Has a crucial role in the pathway because the rate of histidine biosynthesis seems to be controlled primarily by regulation of HisG enzymatic activity. The polypeptide is ATP phosphoribosyltransferase (Chlorobium phaeobacteroides (strain DSM 266 / SMG 266 / 2430)).